A 909-amino-acid chain; its full sequence is Epithelial discoidin domain-containing receptor 1 (909 aa).

Positions 1-18 (MGPEALSSLLLLLLVASG) are cleaved as a signal peptide. Residues 21 to 413 (DMKGHFDPAK…VAKAEGSPTA (393 aa)) are Extracellular-facing. Residues 31-181 (CRYALGMQDR…VCLRVELYGC (151 aa)) form the F5/8 type C domain. 2 cysteine pairs are disulfide-bonded: Cys31-Cys181 and Cys70-Cys173. Positions 45–60 (SDISASSSWSDSTAAR) are enriched in low complexity. The tract at residues 45–65 (SDISASSSWSDSTAARHSSDG) is disordered. The tract at residues 188 to 363 (LSYTAPVGQT…LFSEISFISD (176 aa)) is DS-like domain. Residues Asn207, Gln226, Asp229, Val231, Tyr249, and Tyr251 each contribute to the Ca(2+) site. A glycan (N-linked (GlcNAc...) asparagine) is linked at Asn207. A glycan (N-linked (GlcNAc...) asparagine) is linked at Asn256. Cys299 and Cys344 are disulfide-bonded. Ca(2+) is bound by residues Ser356 and Glu357. Asn366 and Asn390 each carry an N-linked (GlcNAc...) asparagine glycan. The helical transmembrane segment at 414–434 (ILIGCLVAIILLLLLIIALML) threads the bilayer. Topologically, residues 435 to 909 (WRLHWRRLLS…FLAEDALNTV (475 aa)) are cytoplasmic. The segment at 466–495 (ILINNRPGPREPPPYQEPRPRGNPPHSAPC) is disordered. The segment covering 475–492 (REPPPYQEPRPRGNPPHS) has biased composition (pro residues). The PPxY motif signature appears at 477 to 480 (PPPY). Phosphotyrosine; by autocatalysis occurs at positions 480, 509, and 516. In terms of domain architecture, Protein kinase spans 606-901 (LRFKEKLGEG…PPFSQLHRFL (296 aa)). 612-620 (LGEGQFGEV) contacts ATP. The residue at position 627 (Ser627) is a Phosphoserine. ATP is bound at residue Lys651. At Tyr736 the chain carries Phosphotyrosine; by autocatalysis. Residue Asp762 is the Proton acceptor of the active site. Phosphotyrosine; by autocatalysis is present on residues Tyr788, Tyr792, and Tyr793.

Belongs to the protein kinase superfamily. Tyr protein kinase family. Insulin receptor subfamily. As to quaternary structure, homodimer. Interacts (via PPxY motif) with WWC1 (via WW domains) in a collagen-regulated manner. Forms a tripartite complex with WWC1 and PRKCZ, but predominantly in the absence of collagen. Interacts (tyrosine phosphorylated) with SHC1. Interacts with SRC. Interacts with MYH9. Interacts with CDH1. Interacts with PTPN11. Interacts with NCK2. In terms of processing, autophosphorylated in response to fibrillar collagen binding.

It localises to the cell membrane. The enzyme catalyses L-tyrosyl-[protein] + ATP = O-phospho-L-tyrosyl-[protein] + ADP + H(+). Tyrosine kinase that functions as a cell surface receptor for fibrillar collagen and regulates cell attachment to the extracellular matrix, remodeling of the extracellular matrix, cell migration, differentiation, survival and cell proliferation. Collagen binding triggers a signaling pathway that involves SRC and leads to the activation of MAP kinases. Regulates remodeling of the extracellular matrix by up-regulation of the matrix metalloproteinases MMP2, MMP7 and MMP9, and thereby facilitates cell migration and wound healing. Promotes smooth muscle cell migration, and thereby contributes to arterial wound healing. Also plays a role in tumor cell invasion. Phosphorylates PTPN11. Required for normal blastocyst implantation during pregnancy, for normal mammary gland differentiation and normal lactation. Required for normal ear morphology and normal hearing. The chain is Epithelial discoidin domain-containing receptor 1 (DDR1) from Pan troglodytes (Chimpanzee).